A 328-amino-acid chain; its full sequence is Sulfate adenylyltransferase subunit 2 (328 aa).

A disordered region spans residues 309–328 (RAIDKDQTASMEKKKQEGYF).

Belongs to the PAPS reductase family. CysD subfamily. In terms of assembly, heterodimer composed of CysD, the smaller subunit, and CysN.

It carries out the reaction sulfate + ATP + H(+) = adenosine 5'-phosphosulfate + diphosphate. It participates in sulfur metabolism; hydrogen sulfide biosynthesis; sulfite from sulfate: step 1/3. With CysN forms the ATP sulfurylase (ATPS) that catalyzes the adenylation of sulfate producing adenosine 5'-phosphosulfate (APS) and diphosphate, the first enzymatic step in sulfur assimilation pathway. APS synthesis involves the formation of a high-energy phosphoric-sulfuric acid anhydride bond driven by GTP hydrolysis by CysN coupled to ATP hydrolysis by CysD. This Hyphomonas neptunium (strain ATCC 15444) protein is Sulfate adenylyltransferase subunit 2.